We begin with the raw amino-acid sequence, 242 residues long: Biosynthetic peptidoglycan transglycosylase (242 aa).

The helical transmembrane segment at 19-39 threads the bilayer; it reads LLLACAVLWGGGVALFSIVPV.

The protein belongs to the glycosyltransferase 51 family.

Its subcellular location is the cell inner membrane. It catalyses the reaction [GlcNAc-(1-&gt;4)-Mur2Ac(oyl-L-Ala-gamma-D-Glu-L-Lys-D-Ala-D-Ala)](n)-di-trans,octa-cis-undecaprenyl diphosphate + beta-D-GlcNAc-(1-&gt;4)-Mur2Ac(oyl-L-Ala-gamma-D-Glu-L-Lys-D-Ala-D-Ala)-di-trans,octa-cis-undecaprenyl diphosphate = [GlcNAc-(1-&gt;4)-Mur2Ac(oyl-L-Ala-gamma-D-Glu-L-Lys-D-Ala-D-Ala)](n+1)-di-trans,octa-cis-undecaprenyl diphosphate + di-trans,octa-cis-undecaprenyl diphosphate + H(+). It functions in the pathway cell wall biogenesis; peptidoglycan biosynthesis. Functionally, peptidoglycan polymerase that catalyzes glycan chain elongation from lipid-linked precursors. The chain is Biosynthetic peptidoglycan transglycosylase from Klebsiella oxytoca.